We begin with the raw amino-acid sequence, 255 residues long: tRNA pseudouridine synthase A (255 aa).

The active-site Nucleophile is the Asp53. Tyr113 is a binding site for substrate.

This sequence belongs to the tRNA pseudouridine synthase TruA family. In terms of assembly, homodimer.

It carries out the reaction uridine(38/39/40) in tRNA = pseudouridine(38/39/40) in tRNA. Functionally, formation of pseudouridine at positions 38, 39 and 40 in the anticodon stem and loop of transfer RNAs. The sequence is that of tRNA pseudouridine synthase A from Acidiphilium cryptum (strain JF-5).